The sequence spans 84 residues: Large ribosomal subunit protein bL27 (84 aa).

Positions M1–G22 are disordered.

The protein belongs to the bacterial ribosomal protein bL27 family.

This Shewanella woodyi (strain ATCC 51908 / MS32) protein is Large ribosomal subunit protein bL27.